Here is a 1812-residue protein sequence, read N- to C-terminus: Breast cancer type 1 susceptibility protein homolog (1812 aa).

Position 1 is an N-acetylmethionine (Met-1). The RING-type zinc finger occupies 24–65; sequence CPICLELIKEPVSTKCDHIFCKFCMLKLLNQKKGPSQCPLCK. Lys-109 participates in a covalent cross-link: Glycyl lysine isopeptide (Lys-Gly) (interchain with G-Cter in SUMO2). Ser-114 is modified (phosphoserine). A compositionally biased stretch (basic residues) spans 165 to 176; that stretch reads KKNRQTQPRKKS. Residues 165-198 are disordered; the sequence is KKNRQTQPRKKSVYIELDSDSSEETVTKPGDCSV. A Glycyl lysine isopeptide (Lys-Gly) (interchain with G-Cter in SUMO2) cross-link involves residue Lys-298. Polar residues predominate over residues 321–332; that stretch reads SKGTCNDRQVPS. The segment at 321–362 is disordered; it reads SKGTCNDRQVPSTGEKVGPNADSLSDREKWTHPQSLCPENSG. Lys-336 participates in a covalent cross-link: Glycyl lysine isopeptide (Lys-Gly) (interchain with G-Cter in SUMO2). Residues 352 to 362 show a composition bias toward polar residues; it reads HPQSLCPENSG. Ser-392 carries the phosphoserine modification. Glycyl lysine isopeptide (Lys-Gly) (interchain with G-Cter in SUMO2) cross-links involve residues Lys-440, Lys-456, and Lys-512. Disordered stretches follow at residues 492-581 and 640-767; these read PFTN…AKSI and SEET…VSDT. Residues 538 to 556 are compositionally biased toward polar residues; it reads QAVSTTSNCQENKIAGSNL. 2 stretches are compositionally biased toward basic and acidic residues: residues 557 to 572 and 669 to 679; these read QKEK…RKEP and ADAKKNEPNEH. Phosphoserine is present on residues Ser-686, Ser-706, and Ser-717. Polar residues-rich tracts occupy residues 702 to 733 and 758 to 767; these read TSCS…QMSD and STSVSLVSDT. Ser-831 carries the post-translational modification Phosphoserine. 5 disordered regions span residues 864–899, 947–995, 1030–1056, 1147–1185, and 1205–1230; these read KPRS…GQEE, GLSA…STEM, VCST…PPLD, RESS…EDED, and CSSA…SSSD. Residues 947-972 are compositionally biased toward polar residues; the sequence is GLSATGKSGISQNSHFKQSVSPIRSS. Position 971 is a phosphoserine; by CHEK2 (Ser-971). The segment covering 973 to 991 has biased composition (basic and acidic residues); sequence IKTDNRKPLTEGRFERHTS. Ser-992 is subject to Phosphoserine. Residue Lys-1048 forms a Glycyl lysine isopeptide (Lys-Gly) (interchain with G-Cter in SUMO2) linkage. The segment covering 1151-1166 has biased composition (polar residues); the sequence is RSPSPVTHASKSQSLH. 4 positions are modified to phosphoserine: Ser-1152, Ser-1154, Ser-1174, and Ser-1180. Residues 1175 to 1185 are compositionally biased toward acidic residues; it reads SEESDSTEDED. Position 1241 is a phosphoserine (Ser-1241). Residues 1244 to 1289 form a disordered region; the sequence is HQFSEDPRCSGSMFSSQHSAAQGSTANANSQDSNFIPPSKQRSHQC. Residues 1255 to 1279 are compositionally biased toward polar residues; the sequence is SMFSSQHSAAQGSTANANSQDSNFI. 2 positions are modified to phosphoserine: Ser-1297 and Ser-1303. The span at 1313–1323 shows a compositional bias: acidic residues; sequence EEDNDQEEDSI. Residues 1313–1343 are disordered; it reads EEDNDQEEDSIIPDSEASGYESETNLSEDCS. Residues 1333 to 1343 are compositionally biased toward polar residues; sequence ESETNLSEDCS. Ser-1343 carries the post-translational modification Phosphoserine. Phosphothreonine is present on Thr-1350. The segment at 1353-1380 is interaction with PALB2; that stretch reads RATMKYNLIKLQQEMAHLEAVLEQRGNQ. Residues Ser-1413, Ser-1481, and Ser-1495 each carry the phosphoserine modification. Residues 1437 to 1547 form a disordered region; it reads HLEGPTSGDD…AHIGTTPAST (111 aa). Positions 1492–1504 are enriched in polar residues; the sequence is EASSEPHNSTGQS. Over residues 1527-1538 the composition is skewed to basic and acidic residues; that stretch reads RDPESESPKEPA. BRCT domains follow at residues 1585-1679 and 1698-1797; these read SEER…EFEV and SREK…AYLV.

As to quaternary structure, heterodimer with BARD1. Part of the BRCA1-associated genome surveillance complex (BASC), which contains BRCA1, MSH2, MSH6, MLH1, ATM, BLM, PMS2 and the MRE11-RAD50-NBN protein (MRN) complex. This association could be a dynamic process changing throughout the cell cycle and within subnuclear domains. Component of the BRCA1-A complex, at least composed of BRCA1, BARD1, UIMC1/RAP80, ABRAXAS1, BRCC3/BRCC36, BABAM2 and BABAM1/NBA1. Interacts (via the BRCT domains) with ABRAXAS1 (phosphorylated form); this is important for recruitment to sites of DNA damage. Can form a heterotetramer with two molecules of ABRAXAS1 (phosphorylated form). Component of the BRCA1-RBBP8 complex. Interacts (via the BRCT domains) with RBBP8 ('Ser-327' phosphorylated form); the interaction ubiquitinates RBBP8, regulates CHEK1 activation, and involves RBBP8 in BRCA1-dependent G2/M checkpoint control on DNA damage. Associates with RNA polymerase II holoenzyme. Interacts with SMC1A, NELFB, DCLRE1C, CLSPN. CHEK1, CHEK2, BAP1, BRCC3, UBXN1 and PCLAF. Interacts (via BRCT domains) with BRIP1 (phosphorylated form). Interacts with FANCD2 (ubiquitinated form). Interacts with H2AX (phosphorylated on 'Ser-140'). Interacts (via the BRCT domains) with ACACA (phosphorylated form); the interaction prevents dephosphorylation of ACACA. Part of a BRCA complex containing BRCA1, BRCA2 and PALB2. Interacts directly with PALB2; the interaction is essential for its function in HRR. Interacts directly with BRCA2; the interaction occurs only in the presence of PALB2 which serves as the bridging protein. Interacts (via the BRCT domains) with LMO4; the interaction represses the transcriptional activity of BRCA1. Interacts (via the BRCT domains) with CCAR2 (via N-terminus); the interaction represses the transcriptional activator activity of BRCA1. Interacts with EXD2. Interacts (via C-terminus) with DHX9; this interaction is direct and links BRCA1 to the RNA polymerase II holoenzyme. Interacts with DNA helicase ZGRF1; the interaction is increased following DNA damage induction. In terms of processing, phosphorylated in response to IR, UV, and various stimuli that cause checkpoint activation, probably by ATM or ATR. Phosphorylation at Ser-971 by CHEK2 regulates mitotic spindle assembly. Phosphorylation by AURKA regulates centrosomal microtubule nucleation. Post-translationally, autoubiquitinated, undergoes 'Lys-6'-linked polyubiquitination. 'Lys-6'-linked polyubiquitination does not promote degradation. In terms of tissue distribution, in the embryo, expressed in otic vesicles at day 9.5. At day 10.5, this expression decreases and high levels are found in the neuroectoderm. At days 11-12.5, high levels in differentiating keratinocytes and whisker pad primordia. At days 14-17, expression also observed in kidney epithelial cells. In the adult, highest levels found in spleen, thymus, lymph nodes, epithelial organs, and alveolar and ductal epithelial cells of the mammary gland. Very low levels in brain, kidney, and skin. No expression in heart, liver or lung.

It is found in the nucleus. The protein localises to the chromosome. It localises to the cytoplasm. The catalysed reaction is S-ubiquitinyl-[E2 ubiquitin-conjugating enzyme]-L-cysteine + [acceptor protein]-L-lysine = [E2 ubiquitin-conjugating enzyme]-L-cysteine + N(6)-ubiquitinyl-[acceptor protein]-L-lysine.. It functions in the pathway protein modification; protein ubiquitination. Its function is as follows. E3 ubiquitin-protein ligase that specifically mediates the formation of 'Lys-6'-linked polyubiquitin chains and plays a central role in DNA repair by facilitating cellular responses to DNA damage. It is unclear whether it also mediates the formation of other types of polyubiquitin chains. The BRCA1-BARD1 heterodimer coordinates a diverse range of cellular pathways such as DNA damage repair, ubiquitination and transcriptional regulation to maintain genomic stability. Regulates centrosomal microtubule nucleation. Required for appropriate cell cycle arrests after ionizing irradiation in both the S-phase and the G2 phase of the cell cycle. Required for FANCD2 targeting to sites of DNA damage. Inhibits lipid synthesis by binding to inactive phosphorylated ACACA and preventing its dephosphorylation. Contributes to homologous recombination repair (HRR) via its direct interaction with PALB2, fine-tunes recombinational repair partly through its modulatory role in the PALB2-dependent loading of BRCA2-RAD51 repair machinery at DNA breaks. Component of the BRCA1-RBBP8 complex which regulates CHEK1 activation and controls cell cycle G2/M checkpoints on DNA damage via BRCA1-mediated ubiquitination of RBBP8. Acts as a transcriptional activator. The sequence is that of Breast cancer type 1 susceptibility protein homolog (Brca1) from Mus musculus (Mouse).